We begin with the raw amino-acid sequence, 843 residues long: Protein PLASTID MOVEMENT IMPAIRED 1 (843 aa).

Positions 30-58 (PQVSVGNRRTNSLALPRSSVPSLVTSADE) are enriched in polar residues. 2 disordered regions span residues 30-65 (PQVS…ARAE) and 88-116 (LEVE…SGVK). One can recognise a C2 NT-type domain in the interval 131–284 (LVRIGMQKLS…ELALKLGFQI (154 aa)). Disordered stretches follow at residues 300–412 (FGMK…GTIG) and 450–472 (MMKD…EEEQ). A compositionally biased stretch (polar residues) spans 307 to 336 (KPKNFANSFGRKQSKTSFSVPSPKMTSRSE). Residues Ser-314 and Ser-328 each carry the phosphoserine modification. Over residues 365–381 (PEEKPVQKNDKPEQRAE) the composition is skewed to basic and acidic residues. A Phosphothreonine modification is found at Thr-404. Ser-407 carries the phosphoserine modification. The residue at position 410 (Thr-410) is a Phosphothreonine. The segment covering 456-472 (DGGDGETESQRLDEEEQ) has biased composition (acidic residues). The residue at position 507 (Ser-507) is a Phosphoserine.

As to expression, expressed in leaves, stems, cauline leaves, and flowers but not in roots. Present in leaves in both mesophyll and pavement cells.

Its subcellular location is the cytoplasm. Necessary for chloroplast and nuclear photorelocation movements via the regulation of chloroplast-actin (cp-actin) filaments in mesophyll cells, and together with PMIR1, in pavement cells. Required component for both the low- and high-light-dependent chloroplast movement responses via an abscisic acid (ABA) pathway. Involved in the ABA response pathway during seed germination. Modulates ABA accumulation during periods of water deficit at the seedling stage. In Arabidopsis thaliana (Mouse-ear cress), this protein is Protein PLASTID MOVEMENT IMPAIRED 1.